A 409-amino-acid polypeptide reads, in one-letter code: Translation initiation factor 2 subunit gamma (409 aa).

The region spanning 7–203 is the tr-type G domain; it reads QPEVNIGLVG…AIEREIPTPE (197 aa). Positions 16–23 are G1; that stretch reads GHVDHGKT. Mg(2+) is bound by residues Asp19, Thr23, Gly44, and Ser46. Residue 19–24 coordinates GTP; the sequence is DHGKTT. The G2 stretch occupies residues 44 to 48; that stretch reads GISIR. Residues 90-93 form a G3 region; the sequence is DAPG. GTP contacts are provided by residues 146–149 and 181–183; these read NKID and SAQ. The G4 stretch occupies residues 146–149; it reads NKID. Residues 181-183 form a G5 region; sequence SAQ.

The protein belongs to the TRAFAC class translation factor GTPase superfamily. Classic translation factor GTPase family. EIF2G subfamily. Heterotrimer composed of an alpha, a beta and a gamma chain. Requires Mg(2+) as cofactor.

The catalysed reaction is GTP + H2O = GDP + phosphate + H(+). In terms of biological role, eIF-2 functions in the early steps of protein synthesis by forming a ternary complex with GTP and initiator tRNA. This is Translation initiation factor 2 subunit gamma from Haloquadratum walsbyi (strain DSM 16790 / HBSQ001).